Consider the following 267-residue polypeptide: Rhomboid-type serine protease 2 (267 aa).

Helical transmembrane passes span 20 to 40 (LPLF…ASLQ), 67 to 87 (FPLI…LTPL), 99 to 119 (TSLA…YVLI), 126 to 146 (ANHG…MESI), 155 to 179 (FVIG…AALI), and 185 to 206 (LGHL…KLLA). Serine 134 (nucleophile) is an active-site residue. Residue histidine 187 is part of the active site. Residues 247-267 (RPGPSGSAATELVGTTQRLGP) form a disordered region.

This sequence belongs to the peptidase S54 family.

Its subcellular location is the golgi apparatus membrane. It is found in the golgi apparatus. It localises to the cis-Golgi network membrane. It carries out the reaction Cleaves type-1 transmembrane domains using a catalytic dyad composed of serine and histidine that are contributed by different transmembrane domains.. Functionally, probable rhomboid-type serine protease that catalyzes intramembrane proteolysis. The sequence is that of Rhomboid-type serine protease 2 (RBD2) from Gibberella zeae (strain ATCC MYA-4620 / CBS 123657 / FGSC 9075 / NRRL 31084 / PH-1) (Wheat head blight fungus).